Reading from the N-terminus, the 270-residue chain is 4-hydroxy-tetrahydrodipicolinate reductase (270 aa).

Residues 8–13 (GAAGRM) and Glu-34 contribute to the NAD(+) site. Arg-35 lines the NADP(+) pocket. NAD(+)-binding positions include 98–100 (GST) and 122–125 (SPNM). The Proton donor/acceptor role is filled by His-155. Residue His-156 participates in (S)-2,3,4,5-tetrahydrodipicolinate binding. Catalysis depends on Lys-159, which acts as the Proton donor. 165 to 166 (GT) is a binding site for (S)-2,3,4,5-tetrahydrodipicolinate.

Belongs to the DapB family.

It localises to the cytoplasm. It carries out the reaction (S)-2,3,4,5-tetrahydrodipicolinate + NAD(+) + H2O = (2S,4S)-4-hydroxy-2,3,4,5-tetrahydrodipicolinate + NADH + H(+). The enzyme catalyses (S)-2,3,4,5-tetrahydrodipicolinate + NADP(+) + H2O = (2S,4S)-4-hydroxy-2,3,4,5-tetrahydrodipicolinate + NADPH + H(+). It participates in amino-acid biosynthesis; L-lysine biosynthesis via DAP pathway; (S)-tetrahydrodipicolinate from L-aspartate: step 4/4. In terms of biological role, catalyzes the conversion of 4-hydroxy-tetrahydrodipicolinate (HTPA) to tetrahydrodipicolinate. This is 4-hydroxy-tetrahydrodipicolinate reductase from Anaeromyxobacter dehalogenans (strain 2CP-C).